Reading from the N-terminus, the 452-residue chain is MAGKIGFVSLGCPKALVDSELILTQLSAEGYKTAKDYSGADLVVVNTCGFIDSAVEESLSAIGEALAENGKVIVTGCLGARKNADGSDLIHSIHPKVLAVTGPHATDEVMQVIHLHLPKPHDLYTDLVPSARVRLTPKHYAYLKISEGCNHRCTFCIIPNLRGDLVSRPIGDVLLEVKRLFESGVKELLVVSQDTSAYGVDIQYRTGFWDGKPVKTKMFDLVNTLNQIAREHQAWVRLHYVYPYPHVDDILPLMAEFAEHGYGVLPYLDIPLQHAHPDVLKKMKRPASGEKNLERILAWREACPDLVIRSTFIAGFPGETEGEFEYLLNFLDEAQIDRAGCFAYSPVDGATANELANPVPDQIREDRRARLMAKAEEISVGRLAKKIGKRLQVIIDRVDDHGGIGRTIGDAPEIDGLVRVLPANKPSKRYRAGEIIRVTVISSQGHDLIAET.

Residues 3 to 118 (GKIGFVSLGC…VMQVIHLHLP (116 aa)) enclose the MTTase N-terminal domain. Residues cysteine 12, cysteine 48, cysteine 77, cysteine 149, cysteine 153, and cysteine 156 each coordinate [4Fe-4S] cluster. The region spanning 135-382 (LTPKHYAYLK…AKAEEISVGR (248 aa)) is the Radical SAM core domain. Residues 384 to 452 (AKKIGKRLQV…SQGHDLIAET (69 aa)) enclose the TRAM domain.

The protein belongs to the methylthiotransferase family. RimO subfamily. [4Fe-4S] cluster serves as cofactor.

It is found in the cytoplasm. It carries out the reaction L-aspartate(89)-[ribosomal protein uS12]-hydrogen + (sulfur carrier)-SH + AH2 + 2 S-adenosyl-L-methionine = 3-methylsulfanyl-L-aspartate(89)-[ribosomal protein uS12]-hydrogen + (sulfur carrier)-H + 5'-deoxyadenosine + L-methionine + A + S-adenosyl-L-homocysteine + 2 H(+). In terms of biological role, catalyzes the methylthiolation of an aspartic acid residue of ribosomal protein uS12. The chain is Ribosomal protein uS12 methylthiotransferase RimO from Polynucleobacter necessarius subsp. necessarius (strain STIR1).